Reading from the N-terminus, the 343-residue chain is Holliday junction branch migration complex subunit RuvB (343 aa).

The interval 1-181 (MDRIIDSAAT…FGIVQRLEFY (181 aa)) is large ATPase domain (RuvB-L). Residues I20, R21, G62, K65, T66, T67, 128 to 130 (EDF), R171, Y181, and R218 contribute to the ATP site. T66 contacts Mg(2+). The small ATPAse domain (RuvB-S) stretch occupies residues 182–252 (SPEDLARIVR…VAQAAMQMLK (71 aa)). A head domain (RuvB-H) region spans residues 255–343 (QGGFDELDRR…SAFTDPEDLF (89 aa)). 3 residues coordinate DNA: R291, R310, and R315.

This sequence belongs to the RuvB family. As to quaternary structure, homohexamer. Forms an RuvA(8)-RuvB(12)-Holliday junction (HJ) complex. HJ DNA is sandwiched between 2 RuvA tetramers; dsDNA enters through RuvA and exits via RuvB. An RuvB hexamer assembles on each DNA strand where it exits the tetramer. Each RuvB hexamer is contacted by two RuvA subunits (via domain III) on 2 adjacent RuvB subunits; this complex drives branch migration. In the full resolvosome a probable DNA-RuvA(4)-RuvB(12)-RuvC(2) complex forms which resolves the HJ.

It is found in the cytoplasm. The enzyme catalyses ATP + H2O = ADP + phosphate + H(+). Its function is as follows. The RuvA-RuvB-RuvC complex processes Holliday junction (HJ) DNA during genetic recombination and DNA repair, while the RuvA-RuvB complex plays an important role in the rescue of blocked DNA replication forks via replication fork reversal (RFR). RuvA specifically binds to HJ cruciform DNA, conferring on it an open structure. The RuvB hexamer acts as an ATP-dependent pump, pulling dsDNA into and through the RuvAB complex. RuvB forms 2 homohexamers on either side of HJ DNA bound by 1 or 2 RuvA tetramers; 4 subunits per hexamer contact DNA at a time. Coordinated motions by a converter formed by DNA-disengaged RuvB subunits stimulates ATP hydrolysis and nucleotide exchange. Immobilization of the converter enables RuvB to convert the ATP-contained energy into a lever motion, pulling 2 nucleotides of DNA out of the RuvA tetramer per ATP hydrolyzed, thus driving DNA branch migration. The RuvB motors rotate together with the DNA substrate, which together with the progressing nucleotide cycle form the mechanistic basis for DNA recombination by continuous HJ branch migration. Branch migration allows RuvC to scan DNA until it finds its consensus sequence, where it cleaves and resolves cruciform DNA. The protein is Holliday junction branch migration complex subunit RuvB of Xylella fastidiosa (strain Temecula1 / ATCC 700964).